The sequence spans 492 residues: Probable cobyric acid synthase (492 aa).

One can recognise a GATase cobBQ-type domain in the interval 252–444 (PIEVNIVKFS…FHGILENFEF (193 aa)). Cysteine 330 (nucleophile) is an active-site residue. Histidine 436 is a catalytic residue.

Belongs to the CobB/CobQ family. CobQ subfamily.

Its pathway is cofactor biosynthesis; adenosylcobalamin biosynthesis. In terms of biological role, catalyzes amidations at positions B, D, E, and G on adenosylcobyrinic A,C-diamide. NH(2) groups are provided by glutamine, and one molecule of ATP is hydrogenolyzed for each amidation. The sequence is that of Probable cobyric acid synthase from Methanococcus maripaludis (strain C6 / ATCC BAA-1332).